Reading from the N-terminus, the 97-residue chain is Glutamyl-tRNA(Gln) amidotransferase subunit C (97 aa).

It belongs to the GatC family. As to quaternary structure, heterotrimer of A, B and C subunits.

The enzyme catalyses L-glutamyl-tRNA(Gln) + L-glutamine + ATP + H2O = L-glutaminyl-tRNA(Gln) + L-glutamate + ADP + phosphate + H(+). The catalysed reaction is L-aspartyl-tRNA(Asn) + L-glutamine + ATP + H2O = L-asparaginyl-tRNA(Asn) + L-glutamate + ADP + phosphate + 2 H(+). Functionally, allows the formation of correctly charged Asn-tRNA(Asn) or Gln-tRNA(Gln) through the transamidation of misacylated Asp-tRNA(Asn) or Glu-tRNA(Gln) in organisms which lack either or both of asparaginyl-tRNA or glutaminyl-tRNA synthetases. The reaction takes place in the presence of glutamine and ATP through an activated phospho-Asp-tRNA(Asn) or phospho-Glu-tRNA(Gln). The sequence is that of Glutamyl-tRNA(Gln) amidotransferase subunit C from Sulfurisphaera tokodaii (strain DSM 16993 / JCM 10545 / NBRC 100140 / 7) (Sulfolobus tokodaii).